Reading from the N-terminus, the 811-residue chain is MTVKVRFDKEVREYAKGEKVKDSVLKITETALAQALEKFHRRMIVIEGDTLKKAELAGILAGASARVLSDIVGELIEKRLRDESEDKIEVLYATDALGEETFGRKRYEAFRKHFDVLAGSEVNVTAVTFKHTREILGRTYDLLILDMSYDYSPNDLGRIIETVRGGGLIFILAHPFEKWKDMWTGFHKSLVTPPYTIEDVKKRFNRRLIRKFTQHDGIYIITESGKAKKKPKKSKSQAKIRARKGVEIPEETLFPKELYEMALTRGQVEVLKAFEELVDKEGMLVLTADRGRGKSVSVGIAAIGLAVALKKRTRIVVTAPELENVQSLFRFAKRALEKLGFKPYVVEEKGLIKELYARKIGLRYYPPAEGYKKNADLYILDEAAGIHVPILHKYLNKPRVVYSSTIHGYEGAGRGFSVKFLKKAREKRSFKELHMEEPIRYAYGDPIEKWLFDVLLLDAEPVELTEEDYELIKRKEVYLEEPDLDDWFENDREDLRHFVGIYILAHYRNRPSDVALLADAPHHEARVLRLKNGKIVTAVQIAKEGGIPKNVIDKMAKGYKPRGNIIPDMMVKHHYLKEFARLKGYRIVRIATHPDAMDMGLGSKALELLEKEAREKGLDWIGSGFGASEELVRFWVRNGFAVVHLSPARNPVSGEFTAIVLKPISKKAKELIKKANDEFRIRFTEWLGDTHRELEPEIARWLFETPFGEAVDYPIHLTEIQKKRLDAFTGKVLTYDTVVDAVKPIVKLYFLDGWMKPYLDERQIKLLIYRVLQAHSWEETAKLIDRTEMFTMIEVRDIIRGLWYYYKRLLT.

ATP-binding residues include glutamine 267 and arginine 440. Residues 474 to 663 form the N-acetyltransferase domain; sequence RKEVYLEEPD…GEFTAIVLKP (190 aa). Acetyl-CoA contacts are provided by residues 590–592, glutamate 630, and arginine 637; that span reads IAT.

The protein belongs to the TmcA family.

It localises to the cytoplasm. It catalyses the reaction cytidine(34) in elongator tRNA(Met) + acetyl-CoA + ATP + H2O = N(4)-acetylcytidine(34) in elongator tRNA(Met) + ADP + phosphate + CoA + H(+). The enzyme catalyses a cytidine in RNA + acetyl-CoA + ATP + H2O = an N(4)-acetylcytidine in RNA + ADP + phosphate + CoA + H(+). It carries out the reaction a cytidine in tRNA + acetyl-CoA + ATP + H2O = an N(4)-acetylcytidine in tRNA + ADP + phosphate + CoA + H(+). The catalysed reaction is a cytidine in mRNA + acetyl-CoA + ATP + H2O = an N(4)-acetylcytidine in mRNA + ADP + phosphate + CoA + H(+). In terms of biological role, catalyzes the formation of N(4)-acetylcytidine (ac(4)C) at the wobble position of tRNA(Met), by using acetyl-CoA as an acetyl donor and ATP (or GTP). Its function is as follows. Catalyzes the formation of 404 N(4)-acetylcytidine (ac(4)C) sites in RNA, almost always on the middle C of a CCG motif. There 173 ac(4)C sites in rRNA, 35 in non-coding (nc)RNA, 119 in mRNA and 77 in tRNA. More acetylation is observed at 85 and 95 than at 65 or 75 degrees Celsius. This chain is tRNA(Met) cytidine acetyltransferase TmcA, found in Thermococcus kodakarensis (strain ATCC BAA-918 / JCM 12380 / KOD1) (Pyrococcus kodakaraensis (strain KOD1)).